A 211-amino-acid chain; its full sequence is Arginine exporter protein ArgO (211 aa).

A run of 6 helical transmembrane segments spans residues 1 to 21 (MISY…PLGP), 37 to 57 (LMIA…GIFG), 68 to 88 (LLAL…LGAL), 111 to 131 (IIAT…DTFV), 147 to 167 (WFAL…ALLA), and 179 to 199 (AQRI…FQLA).

Belongs to the LysE/ArgO transporter (TC 2.A.75) family.

It localises to the cell inner membrane. The catalysed reaction is L-arginine(in) = L-arginine(out). Functionally, involved in the export of arginine. Important to control the intracellular level of arginine and the correct balance between arginine and lysine. The protein is Arginine exporter protein ArgO of Salmonella enteritidis PT4 (strain P125109).